We begin with the raw amino-acid sequence, 309 residues long: Glutaminase 2 (309 aa).

Residues S65, N117, E162, N169, Y193, Y245, and V263 each contribute to the substrate site.

Belongs to the glutaminase family. In terms of assembly, homotetramer.

The catalysed reaction is L-glutamine + H2O = L-glutamate + NH4(+). The chain is Glutaminase 2 from Bacillus subtilis (strain 168).